Reading from the N-terminus, the 234-residue chain is Lipoprotein-releasing system ATP-binding protein LolD 1 (234 aa).

One can recognise an ABC transporter domain in the interval I5 to G231. G41–S48 contributes to the ATP binding site.

The protein belongs to the ABC transporter superfamily. Lipoprotein translocase (TC 3.A.1.125) family. The complex is composed of two ATP-binding proteins (LolD) and two transmembrane proteins (LolC and LolE).

The protein localises to the cell inner membrane. Part of the ABC transporter complex LolCDE involved in the translocation of mature outer membrane-directed lipoproteins, from the inner membrane to the periplasmic chaperone, LolA. Responsible for the formation of the LolA-lipoprotein complex in an ATP-dependent manner. The protein is Lipoprotein-releasing system ATP-binding protein LolD 1 of Caulobacter vibrioides (strain ATCC 19089 / CIP 103742 / CB 15) (Caulobacter crescentus).